Reading from the N-terminus, the 140-residue chain is MTERTFSIIKPDAVKRNLIGAILTRFEQNGFKIIASKMVRLTREQAEGFYAEHQGKEFFAPLVEYMMSSPIVVSVLEKENAVKDYRTLIGTTNPETAEEGTIRKDFALSQRENSVHGSDSIENANREIAYFFTDCEIFER.

ATP contacts are provided by K10, F58, R86, T92, R103, and N113. Residue H116 is the Pros-phosphohistidine intermediate of the active site.

Belongs to the NDK family. As to quaternary structure, homotetramer. Mg(2+) is required as a cofactor.

It localises to the cytoplasm. It catalyses the reaction a 2'-deoxyribonucleoside 5'-diphosphate + ATP = a 2'-deoxyribonucleoside 5'-triphosphate + ADP. The enzyme catalyses a ribonucleoside 5'-diphosphate + ATP = a ribonucleoside 5'-triphosphate + ADP. Major role in the synthesis of nucleoside triphosphates other than ATP. The ATP gamma phosphate is transferred to the NDP beta phosphate via a ping-pong mechanism, using a phosphorylated active-site intermediate. This is Nucleoside diphosphate kinase from Haemophilus influenzae (strain PittEE).